Reading from the N-terminus, the 587-residue chain is Chaperonin CPN60, mitochondrial (587 aa).

The transit peptide at M1 to Y32 directs the protein to the mitochondrion.

The protein belongs to the chaperonin (HSP60) family.

The protein resides in the mitochondrion. In terms of biological role, implicated in mitochondrial protein import and macromolecular assembly. May facilitate the correct folding of imported proteins. May also prevent misfolding and promote the refolding and proper assembly of unfolded polypeptides generated under stress conditions in the mitochondrial matrix. The polypeptide is Chaperonin CPN60, mitochondrial (Brassica napus (Rape)).